A 92-amino-acid polypeptide reads, in one-letter code: Em-like protein GEA6 (92 aa).

2 stretches are compositionally biased toward basic and acidic residues: residues 1–18 (MASQ…KKGE) and 37–51 (AEGR…KEQL). Residues 1–92 (MASQQEKKQL…IDESKFRTKT (92 aa)) form a disordered region.

This sequence belongs to the small hydrophilic plant seed protein family. In terms of tissue distribution, present only in nearly dry and dry seeds.

In terms of biological role, it is thought to provide protection for the cytoplasm during the desiccation stage of embryo development. This chain is Em-like protein GEA6 (EM6), found in Arabidopsis thaliana (Mouse-ear cress).